A 172-amino-acid polypeptide reads, in one-letter code: Ribosome maturation factor RimM (172 aa).

A PRC barrel domain is found at 96–168 (EGEFYYHQII…RVDVELMEGL (73 aa)).

Belongs to the RimM family. Binds ribosomal protein uS19.

The protein localises to the cytoplasm. Its function is as follows. An accessory protein needed during the final step in the assembly of 30S ribosomal subunit, possibly for assembly of the head region. Essential for efficient processing of 16S rRNA. May be needed both before and after RbfA during the maturation of 16S rRNA. It has affinity for free ribosomal 30S subunits but not for 70S ribosomes. This Streptococcus pyogenes serotype M6 (strain ATCC BAA-946 / MGAS10394) protein is Ribosome maturation factor RimM.